Consider the following 334-residue polypeptide: Glycerol-3-phosphate dehydrogenase [NAD(P)+] (334 aa).

Tryptophan 13, arginine 33, and lysine 106 together coordinate NADPH. Lysine 106, glycine 137, and serine 139 together coordinate sn-glycerol 3-phosphate. Residue alanine 141 participates in NADPH binding. The sn-glycerol 3-phosphate site is built by lysine 192, aspartate 245, serine 255, arginine 256, and asparagine 257. The Proton acceptor role is filled by lysine 192. Arginine 256 lines the NADPH pocket. Positions 280 and 282 each coordinate NADPH.

Belongs to the NAD-dependent glycerol-3-phosphate dehydrogenase family.

The protein resides in the cytoplasm. It catalyses the reaction sn-glycerol 3-phosphate + NAD(+) = dihydroxyacetone phosphate + NADH + H(+). The enzyme catalyses sn-glycerol 3-phosphate + NADP(+) = dihydroxyacetone phosphate + NADPH + H(+). The protein operates within membrane lipid metabolism; glycerophospholipid metabolism. Functionally, catalyzes the reduction of the glycolytic intermediate dihydroxyacetone phosphate (DHAP) to sn-glycerol 3-phosphate (G3P), the key precursor for phospholipid synthesis. In Chlamydia muridarum (strain MoPn / Nigg), this protein is Glycerol-3-phosphate dehydrogenase [NAD(P)+].